The primary structure comprises 461 residues: Photosystem II CP43 reaction center protein (461 aa).

Residues 1-2 (ME) constitute a propeptide that is removed on maturation. T3 is subject to N-acetylthreonine. Residue T3 is modified to Phosphothreonine. 5 helical membrane passes run 57–81 (LFEV…PHLA), 122–143 (LIGP…KDKN), 166–188 (KAMY…RIIT), 243–263 (QPWA…LSYS), and 279–300 (WFNN…ASQS). E355 is a binding site for [CaMn4O5] cluster. Residues 435 to 459 (RARAAAAGFEKGIDRLTEPVLSLKP) form a helical membrane-spanning segment.

This sequence belongs to the PsbB/PsbC family. PsbC subfamily. As to quaternary structure, PSII is composed of 1 copy each of membrane proteins PsbA, PsbB, PsbC, PsbD, PsbE, PsbF, PsbH, PsbI, PsbJ, PsbK, PsbL, PsbM, PsbT, PsbX, PsbY, PsbZ, Psb30/Ycf12, at least 3 peripheral proteins of the oxygen-evolving complex and a large number of cofactors. It forms dimeric complexes. Requires Binds multiple chlorophylls and provides some of the ligands for the Ca-4Mn-5O cluster of the oxygen-evolving complex. It may also provide a ligand for a Cl- that is required for oxygen evolution. PSII binds additional chlorophylls, carotenoids and specific lipids. as cofactor.

The protein resides in the plastid. The protein localises to the chloroplast thylakoid membrane. Functionally, one of the components of the core complex of photosystem II (PSII). It binds chlorophyll and helps catalyze the primary light-induced photochemical processes of PSII. PSII is a light-driven water:plastoquinone oxidoreductase, using light energy to abstract electrons from H(2)O, generating O(2) and a proton gradient subsequently used for ATP formation. The protein is Photosystem II CP43 reaction center protein of Stigeoclonium helveticum (Green alga).